The sequence spans 169 residues: 3-hydroxyanthranilate 3,4-dioxygenase (169 aa).

Residue Arg-44 participates in O2 binding. His-48, Glu-54, and His-92 together coordinate Fe cation. Substrate is bound at residue Glu-54. Substrate contacts are provided by Arg-96 and Glu-106. Cys-121, Cys-124, Cys-158, and Cys-160 together coordinate a divalent metal cation.

The protein belongs to the 3-HAO family. Fe(2+) is required as a cofactor.

The protein localises to the cytoplasm. The catalysed reaction is 3-hydroxyanthranilate + O2 = (2Z,4Z)-2-amino-3-carboxymuconate 6-semialdehyde. It functions in the pathway cofactor biosynthesis; NAD(+) biosynthesis; quinolinate from L-kynurenine: step 3/3. Functionally, catalyzes the oxidative ring opening of 3-hydroxyanthranilate to 2-amino-3-carboxymuconate semialdehyde, which spontaneously cyclizes to quinolinate. The polypeptide is 3-hydroxyanthranilate 3,4-dioxygenase (Meyerozyma guilliermondii (strain ATCC 6260 / CBS 566 / DSM 6381 / JCM 1539 / NBRC 10279 / NRRL Y-324) (Yeast)).